A 150-amino-acid polypeptide reads, in one-letter code: Large ribosomal subunit protein bL9 (150 aa).

This sequence belongs to the bacterial ribosomal protein bL9 family.

Functionally, binds to the 23S rRNA. This Lactiplantibacillus plantarum (strain ATCC BAA-793 / NCIMB 8826 / WCFS1) (Lactobacillus plantarum) protein is Large ribosomal subunit protein bL9.